A 731-amino-acid polypeptide reads, in one-letter code: NADH-ubiquinone oxidoreductase 75 kDa subunit, mitochondrial (731 aa).

The N-terminal 27 residues, 1 to 27 (MIRAPLVKALGALGSPTHQMASRAVRT), are a transit peptide targeting the mitochondrion. The 2Fe-2S ferredoxin-type domain maps to 40 to 118 (EKIEVFVDDI…GWRIKTNSDL (79 aa)). Residues cysteine 74, cysteine 85, cysteine 88, and cysteine 102 each coordinate [2Fe-2S] cluster. The region spanning 118-157 (LTRKAREGVMEFLLMNHPLDCPICDQGGECDLQDQAMAFG) is the 4Fe-4S His(Cys)3-ligated-type domain. [4Fe-4S] cluster is bound by residues histidine 134, cysteine 138, cysteine 141, cysteine 147, cysteine 190, cysteine 193, cysteine 196, and cysteine 240. The 4Fe-4S Mo/W bis-MGD-type domain occupies 259–315 (IRKVSSIDVLDAVGSNIVVSTRTNEVLRILPRENEDVNEEWLADKSRFACDGLKRQR).

The protein belongs to the complex I 75 kDa subunit family. As to quaternary structure, complex I is composed of about 45 different subunits. The cofactor is [2Fe-2S] cluster. [4Fe-4S] cluster serves as cofactor.

The protein localises to the mitochondrion inner membrane. It carries out the reaction a ubiquinone + NADH + 5 H(+)(in) = a ubiquinol + NAD(+) + 4 H(+)(out). In terms of biological role, core subunit of the mitochondrial membrane respiratory chain NADH dehydrogenase (Complex I) that is believed to belong to the minimal assembly required for catalysis. Complex I functions in the transfer of electrons from NADH to the respiratory chain. The immediate electron acceptor for the enzyme is believed to be ubiquinone. This is the largest subunit of complex I and it is a component of the iron-sulfur (IP) fragment of the enzyme. It may form part of the active site crevice where NADH is oxidized. The sequence is that of NADH-ubiquinone oxidoreductase 75 kDa subunit, mitochondrial from Drosophila melanogaster (Fruit fly).